The sequence spans 393 residues: Bifunctional enzyme Fae/Hps (393 aa).

The segment at 1–161 is formaldehyde-activating enzyme; that stretch reads MYLVGEALIG…YEKDRAAHGI (161 aa). Catalysis depends on H17, which acts as the Proton donor. The substrate site is built by D19, L48, K66, T68, and Q83. The segment at 162 to 393 is 3-hexulose-6-phosphate synthase; sequence MGFKVQRLWD…IDQFRIMTDF (232 aa).

This sequence in the N-terminal section; belongs to the formaldehyde-activating enzyme family. In the C-terminal section; belongs to the HPS/KGPDC family. HPS subfamily.

It carries out the reaction 5,6,7,8-tetrahydromethanopterin + formaldehyde = 5,10-methylenetetrahydromethanopterin + H2O. The enzyme catalyses D-ribulose 5-phosphate + formaldehyde = D-arabino-hex-3-ulose 6-phosphate. The protein operates within carbohydrate biosynthesis; D-ribose 5-phosphate biosynthesis. In terms of biological role, catalyzes the condensation of formaldehyde with tetrahydromethanopterin (H(4)MPT) to 5,10-methylenetetrahydromethanopterin. Its function is as follows. Catalyzes the reversible formation of ribulose-5-phosphate and formaldehyde from 3-hexulose-6-phosphate. The chain is Bifunctional enzyme Fae/Hps from Methanoregula boonei (strain DSM 21154 / JCM 14090 / 6A8).